We begin with the raw amino-acid sequence, 278 residues long: MAVSTFSSPTPVFGIAEPPASFSSTAIGWKQPLRFRRTKKPRVISCDYSCIEVRDVCYRPPGTQLNILNGVNFSLREKSFGLIFGKSGSGKTTLLQLLAGLNKPTSGSICIQGYGDDGQPKADPDLLPTEKVGIVFQFPERFFVADNVLDEITFGWPRQKGSLQLKEQLTSNLQRAFNWVGLDSIPLDKDPQLLSGGYKRRLALAIQLVQTPDLLILDEPLAGLDWKARADVAKLLKHLKKELTLLVVSHDLRELAALVDQSWRMETGGVLVAERPPL.

The transit peptide at 1–49 (MAVSTFSSPTPVFGIAEPPASFSSTAIGWKQPLRFRRTKKPRVISCDYS) directs the protein to the chloroplast. An ABC transporter domain is found at 51 to 278 (IEVRDVCYRP…GVLVAERPPL (228 aa)). An ATP-binding site is contributed by 85–92 (GKSGSGKT).

Belongs to the ABC transporter superfamily. ABCI family.

Its subcellular location is the plastid. It localises to the chloroplast. This is ABC transporter I family member 11, chloroplastic (ABCI11) from Arabidopsis thaliana (Mouse-ear cress).